The primary structure comprises 210 residues: Glutathione S-transferase P 1 (210 aa).

One can recognise a GST N-terminal domain in the interval 2 to 81 (PPYTIVYFPV…HLGRSLGLYG (80 aa)). Tyr-4 carries the post-translational modification Phosphotyrosine; by EGFR. Residues Tyr-8, Arg-14, Trp-39, Lys-45, and 52-53 (QL) each bind glutathione. The residue at position 62 (Thr-62) is a Phosphothreonine. A glutathione-binding site is contributed by 65 to 66 (QS). The GST C-terminal domain maps to 83-204 (NQREAAQMDM…SSPEHVNRPI (122 aa)). An N6-succinyllysine mark is found at Lys-103 and Lys-116. Residue Lys-128 is modified to N6-acetyllysine.

Homodimer. Interacts with CDK5. As to expression, ubiquitously expressed.

It localises to the cytoplasm. It is found in the mitochondrion. The protein localises to the nucleus. The enzyme catalyses RX + glutathione = an S-substituted glutathione + a halide anion + H(+). The catalysed reaction is prostaglandin J2 + glutathione = prostaglandin J2-S-(R)-glutathione. It catalyses the reaction prostaglandin J2 + glutathione = prostaglandin J2-S-(S)-glutathione. It carries out the reaction prostaglandin A2 + glutathione = prostaglandin A2-S-(S)-glutathione. The enzyme catalyses 11(S)-hydroxy-14(S),15(S)-epoxy-(5Z,8Z,12E)-eicosatrienoate + glutathione = (11S,15S)-dihydroxy-14(R)-S-glutathionyl-(5Z,8Z,12E)-eicosatrienoate. In terms of biological role, conjugation of reduced glutathione to a wide number of exogenous and endogenous hydrophobic electrophiles. Involved in the formation of glutathione conjugates of both prostaglandin A2 (PGA2) and prostaglandin J2 (PGJ2). Participates in the formation of novel hepoxilin regioisomers. Negatively regulates CDK5 activity via p25/p35 translocation to prevent neurodegeneration. This chain is Glutathione S-transferase P 1, found in Mus musculus (Mouse).